The primary structure comprises 136 residues: MLSPKKQKYRKAQKGRVASKAKAGTMIAFGEFGLKSLDSCRITSRQIEAARRAAVRCMKRQGKFWINIFPSIPVSKKPTEVRMGKGKGATEFFAARVAVGRILFELDGVSEGIAIKALELAGAKLPVRTKIVKRYE.

It belongs to the universal ribosomal protein uL16 family. In terms of assembly, part of the 50S ribosomal subunit.

Its function is as follows. Binds 23S rRNA and is also seen to make contacts with the A and possibly P site tRNAs. The sequence is that of Large ribosomal subunit protein uL16 from Orientia tsutsugamushi (strain Ikeda) (Rickettsia tsutsugamushi).